The following is a 239-amino-acid chain: tRNA (guanine-N(7)-)-methyltransferase (239 aa).

S-adenosyl-L-methionine-binding residues include Glu69, Glu94, Asp121, and Asp144. The active site involves Asp144. Substrate is bound at residue Lys148. The interval 150–155 (RHNKRR) is interaction with RNA. Residues Asp180 and 217-220 (TKFE) contribute to the substrate site.

It belongs to the class I-like SAM-binding methyltransferase superfamily. TrmB family. As to quaternary structure, monomer.

It carries out the reaction guanosine(46) in tRNA + S-adenosyl-L-methionine = N(7)-methylguanosine(46) in tRNA + S-adenosyl-L-homocysteine. The protein operates within tRNA modification; N(7)-methylguanine-tRNA biosynthesis. Functionally, catalyzes the formation of N(7)-methylguanine at position 46 (m7G46) in tRNA. The chain is tRNA (guanine-N(7)-)-methyltransferase from Photorhabdus laumondii subsp. laumondii (strain DSM 15139 / CIP 105565 / TT01) (Photorhabdus luminescens subsp. laumondii).